The following is a 336-amino-acid chain: 3-isopropylmalate dehydrogenase (336 aa).

Substrate-binding residues include R87, R97, R121, and D211. D211, D235, and D239 together coordinate Mg(2+). 271–283 (GSAPDIAGQGIAD) is a binding site for NAD(+).

It belongs to the isocitrate and isopropylmalate dehydrogenases family. LeuB type 2 subfamily. As to quaternary structure, homodimer. Mg(2+) serves as cofactor. Requires Mn(2+) as cofactor.

It is found in the cytoplasm. It carries out the reaction (2R,3S)-3-isopropylmalate + NAD(+) = 4-methyl-2-oxopentanoate + CO2 + NADH. The protein operates within amino-acid biosynthesis; L-leucine biosynthesis; L-leucine from 3-methyl-2-oxobutanoate: step 3/4. Its function is as follows. Catalyzes the oxidation of 3-carboxy-2-hydroxy-4-methylpentanoate (3-isopropylmalate) to 3-carboxy-4-methyl-2-oxopentanoate. The product decarboxylates to 4-methyl-2 oxopentanoate. This is 3-isopropylmalate dehydrogenase from Mycobacterium sp. (strain JLS).